Reading from the N-terminus, the 155-residue chain is Cytochrome c-type biogenesis protein CcmE (155 aa).

Residues 1 to 7 (MTRKQKR) are Cytoplasmic-facing. A helical; Signal-anchor for type II membrane protein transmembrane segment spans residues 8–28 (LVVIAGGMSFILAAVLLVMFA). Over 29-155 (FSQSVAYFYM…GKGQEAKATP (127 aa)) the chain is Periplasmic. 2 residues coordinate heme: His124 and Tyr128.

This sequence belongs to the CcmE/CycJ family.

The protein localises to the cell inner membrane. In terms of biological role, heme chaperone required for the biogenesis of c-type cytochromes. Transiently binds heme delivered by CcmC and transfers the heme to apo-cytochromes in a process facilitated by CcmF and CcmH. The polypeptide is Cytochrome c-type biogenesis protein CcmE (Rhizobium etli (strain ATCC 51251 / DSM 11541 / JCM 21823 / NBRC 15573 / CFN 42)).